Consider the following 209-residue polypeptide: Imidazole glycerol phosphate synthase subunit HisH (209 aa).

The region spanning 4 to 209 is the Glutamine amidotransferase type-1 domain; that stretch reads PVVVFEYGSG…RLLANWIGSL (206 aa). Cys82 acts as the Nucleophile in catalysis. Residues His190 and Glu192 contribute to the active site.

Heterodimer of HisH and HisF.

The protein localises to the cytoplasm. The enzyme catalyses 5-[(5-phospho-1-deoxy-D-ribulos-1-ylimino)methylamino]-1-(5-phospho-beta-D-ribosyl)imidazole-4-carboxamide + L-glutamine = D-erythro-1-(imidazol-4-yl)glycerol 3-phosphate + 5-amino-1-(5-phospho-beta-D-ribosyl)imidazole-4-carboxamide + L-glutamate + H(+). The catalysed reaction is L-glutamine + H2O = L-glutamate + NH4(+). It participates in amino-acid biosynthesis; L-histidine biosynthesis; L-histidine from 5-phospho-alpha-D-ribose 1-diphosphate: step 5/9. IGPS catalyzes the conversion of PRFAR and glutamine to IGP, AICAR and glutamate. The HisH subunit catalyzes the hydrolysis of glutamine to glutamate and ammonia as part of the synthesis of IGP and AICAR. The resulting ammonia molecule is channeled to the active site of HisF. The protein is Imidazole glycerol phosphate synthase subunit HisH of Leifsonia xyli subsp. xyli (strain CTCB07).